The following is a 258-amino-acid chain: Leucyl/phenylalanyl-tRNA--protein transferase (258 aa).

The tract at residues 199 to 220 is disordered; that stretch reads GGSDGPAPDQSIGMSSSGGVSD. Positions 209–220 are enriched in low complexity; it reads SIGMSSSGGVSD.

The protein belongs to the L/F-transferase family.

The protein resides in the cytoplasm. It catalyses the reaction N-terminal L-lysyl-[protein] + L-leucyl-tRNA(Leu) = N-terminal L-leucyl-L-lysyl-[protein] + tRNA(Leu) + H(+). It carries out the reaction N-terminal L-arginyl-[protein] + L-leucyl-tRNA(Leu) = N-terminal L-leucyl-L-arginyl-[protein] + tRNA(Leu) + H(+). The enzyme catalyses L-phenylalanyl-tRNA(Phe) + an N-terminal L-alpha-aminoacyl-[protein] = an N-terminal L-phenylalanyl-L-alpha-aminoacyl-[protein] + tRNA(Phe). Its function is as follows. Functions in the N-end rule pathway of protein degradation where it conjugates Leu, Phe and, less efficiently, Met from aminoacyl-tRNAs to the N-termini of proteins containing an N-terminal arginine or lysine. This Hyphomonas neptunium (strain ATCC 15444) protein is Leucyl/phenylalanyl-tRNA--protein transferase.